Reading from the N-terminus, the 314-residue chain is Putative peptide transport system permease protein BRA1092/BS1330_II1084 (314 aa).

The next 6 helical transmembrane spans lie at 12–32 (AIPVMLIVAILTFLLMKLLPG), 101–121 (LALLAFAITIPVGIIMGVVAA), 135–155 (LALLGVSVPSFWLAILAVILF), 177–197 (WLRSLILPASILALFQIGYLA), 237–257 (VSVLTVSGYIFSLLIGGSVVI), and 286–306 (MLFLGFLFVAINVLVDILYTI). The 210-residue stretch at 95–304 (LPVTISLALL…AINVLVDILY (210 aa)) folds into the ABC transmembrane type-1 domain.

Belongs to the binding-protein-dependent transport system permease family. In terms of assembly, the complex is composed of two ATP-binding proteins (BRA1094), two transmembrane proteins (BRA1092 and BRA1093) and a solute-binding protein (BRA1090).

Its subcellular location is the cell inner membrane. In terms of biological role, probably part of an ABC transporter complex that could be involved in peptide import. Probably responsible for the translocation of the substrate across the membrane. In Brucella suis biovar 1 (strain 1330), this protein is Putative peptide transport system permease protein BRA1092/BS1330_II1084.